Here is a 202-residue protein sequence, read N- to C-terminus: MVIQRKYRASRRLGVSLWGRSKDPFNTRNYPPGQHGNMGYKKPSDFGKQFGAHKKFKFYYAISSKQMRNMFLKAYKKKGDTGDNFVGLLESMLSSVLYNSGLVPTIFSARQLISHKHVLVNGKVVNISSYSVKPGDTIKLREKAVNLPPVLAAIDAQEQKVPDYLEVDVKERSVKYLRVPKYYEVPYPANMEVNLVIEFYSR.

An S4 RNA-binding domain is found at 91–168 (SMLSSVLYNS…QKVPDYLEVD (78 aa)).

This sequence belongs to the universal ribosomal protein uS4 family. In terms of assembly, part of the 30S ribosomal subunit. Contacts protein S5. The interaction surface between S4 and S5 is involved in control of translational fidelity.

In terms of biological role, one of the primary rRNA binding proteins, it binds directly to 16S rRNA where it nucleates assembly of the body of the 30S subunit. Functionally, with S5 and S12 plays an important role in translational accuracy. This Ehrlichia ruminantium (strain Welgevonden) protein is Small ribosomal subunit protein uS4.